Consider the following 874-residue polypeptide: Alanine--tRNA ligase (874 aa).

4 residues coordinate Zn(2+): histidine 563, histidine 567, cysteine 665, and histidine 669.

It belongs to the class-II aminoacyl-tRNA synthetase family. Requires Zn(2+) as cofactor.

Its subcellular location is the cytoplasm. The enzyme catalyses tRNA(Ala) + L-alanine + ATP = L-alanyl-tRNA(Ala) + AMP + diphosphate. Functionally, catalyzes the attachment of alanine to tRNA(Ala) in a two-step reaction: alanine is first activated by ATP to form Ala-AMP and then transferred to the acceptor end of tRNA(Ala). Also edits incorrectly charged Ser-tRNA(Ala) and Gly-tRNA(Ala) via its editing domain. In Histophilus somni (strain 129Pt) (Haemophilus somnus), this protein is Alanine--tRNA ligase.